The sequence spans 208 residues: Large ribosomal subunit protein uL4 (208 aa).

Positions R45–H95 are disordered. Residues G69 to S80 show a composition bias toward polar residues.

The protein belongs to the universal ribosomal protein uL4 family. As to quaternary structure, part of the 50S ribosomal subunit.

One of the primary rRNA binding proteins, this protein initially binds near the 5'-end of the 23S rRNA. It is important during the early stages of 50S assembly. It makes multiple contacts with different domains of the 23S rRNA in the assembled 50S subunit and ribosome. In terms of biological role, forms part of the polypeptide exit tunnel. This chain is Large ribosomal subunit protein uL4, found in Chlorobium chlorochromatii (strain CaD3).